We begin with the raw amino-acid sequence, 142 residues long: Ribosomal RNA large subunit methyltransferase H (142 aa).

2 residues coordinate S-adenosyl-L-methionine: Leu-55 and Gly-87.

Belongs to the RNA methyltransferase RlmH family. Homodimer.

Its subcellular location is the cytoplasm. The enzyme catalyses pseudouridine(1915) in 23S rRNA + S-adenosyl-L-methionine = N(3)-methylpseudouridine(1915) in 23S rRNA + S-adenosyl-L-homocysteine + H(+). Specifically methylates the pseudouridine at position 1915 (m3Psi1915) in 23S rRNA. The chain is Ribosomal RNA large subunit methyltransferase H from Sphingopyxis alaskensis (strain DSM 13593 / LMG 18877 / RB2256) (Sphingomonas alaskensis).